A 128-amino-acid polypeptide reads, in one-letter code: Small ribosomal subunit protein bS6 (128 aa).

It belongs to the bacterial ribosomal protein bS6 family.

Its function is as follows. Binds together with bS18 to 16S ribosomal RNA. The polypeptide is Small ribosomal subunit protein bS6 (rpsF) (Thermotoga maritima (strain ATCC 43589 / DSM 3109 / JCM 10099 / NBRC 100826 / MSB8)).